The primary structure comprises 259 residues: UPF0246 protein PFLU_0992 (259 aa).

Belongs to the UPF0246 family.

In Pseudomonas fluorescens (strain SBW25), this protein is UPF0246 protein PFLU_0992.